Reading from the N-terminus, the 90-residue chain is Small ribosomal subunit protein bS20 (90 aa).

Belongs to the bacterial ribosomal protein bS20 family.

In terms of biological role, binds directly to 16S ribosomal RNA. In Francisella philomiragia subsp. philomiragia (strain ATCC 25017 / CCUG 19701 / FSC 153 / O#319-036), this protein is Small ribosomal subunit protein bS20.